Consider the following 251-residue polypeptide: Probable-ribose 5-phosphate isomerase (251 aa).

The protein belongs to the ribose 5-phosphate isomerase family.

The enzyme catalyses aldehydo-D-ribose 5-phosphate = D-ribulose 5-phosphate. It participates in carbohydrate degradation; pentose phosphate pathway; D-ribose 5-phosphate from D-ribulose 5-phosphate (non-oxidative stage): step 1/1. In Caenorhabditis elegans, this protein is Probable-ribose 5-phosphate isomerase (rpia-1).